Here is a 181-residue protein sequence, read N- to C-terminus: Adenine phosphoribosyltransferase (181 aa).

Belongs to the purine/pyrimidine phosphoribosyltransferase family. In terms of assembly, homodimer.

It localises to the cytoplasm. It catalyses the reaction AMP + diphosphate = 5-phospho-alpha-D-ribose 1-diphosphate + adenine. It participates in purine metabolism; AMP biosynthesis via salvage pathway; AMP from adenine: step 1/1. Its function is as follows. Catalyzes a salvage reaction resulting in the formation of AMP, that is energically less costly than de novo synthesis. The protein is Adenine phosphoribosyltransferase of Vibrio campbellii (strain ATCC BAA-1116).